Consider the following 186-residue polypeptide: Large ribosomal subunit protein bL12c (186 aa).

Polar residues predominate over residues 1–11; that stretch reads MASTLSTITLR. Residues 1 to 24 form a disordered region; the sequence is MASTLSTITLRSPSPSTATSTHAS. The transit peptide at 1-53 directs the protein to the chloroplast; the sequence is MASTLSTITLRSPSPSTATSTHASIPFPKKTLEFPIRTPKLQNRRATFLRPLA. A compositionally biased stretch (low complexity) spans 12-24; that stretch reads SPSPSTATSTHAS.

It belongs to the bacterial ribosomal protein bL12 family.

It localises to the plastid. The protein localises to the chloroplast. This Nicotiana sylvestris (Wood tobacco) protein is Large ribosomal subunit protein bL12c.